We begin with the raw amino-acid sequence, 556 residues long: MNHMERKKEQLRVEVRRAVLQAELATESEVPSVLLEAPKDKAHGDFATNIAMQLARIAKKAPRAIAEELVANFDRKQAGIEKIEIAGPGFINFFLDNGYLRELIPQVLTEKDDYGSSDVGQGEKVLIEFVSANPTGDLHLGHARGAAVGDTIANIMDKAGYKVSREYYINDAGNQIENLAASLNARYLQVLGEDQPMPEDGYHGQDIIDIAKQLVDEAGDQYRQLDEKERLAFMRDYGLKKELEKIKQDLNAYRVEFDKWFSETSLYESGQVERGLQVLKDKNETYEKDGATWLRSTAYGDDKDRVLVKQDGTYTYLTPDISYHLDKFDRGHDRLIDVLGADHHGYIPRMRAAIQALGYDPARFNVQIIQMVSLFQGGEKVKMSKRTGKAVTLRELMEEVGVDATRYFFAMRSPDTHLDFDMDLAVSKSNENPVYYIQYAHARVCSILRQGEELGIPYSANTDLSPIASEKEYELLKAIGEFPGAVAEAATKQIPQRIANYAYDLAQALHSFYNVTRVIDTENKDLSAARLALMKATQMTIKNALALLGVEAPEKM.

The short motif at 132–142 is the 'HIGH' region element; sequence ANPTGDLHLGH.

Belongs to the class-I aminoacyl-tRNA synthetase family. In terms of assembly, monomer.

The protein resides in the cytoplasm. It catalyses the reaction tRNA(Arg) + L-arginine + ATP = L-arginyl-tRNA(Arg) + AMP + diphosphate. This is Arginine--tRNA ligase from Shouchella clausii (strain KSM-K16) (Alkalihalobacillus clausii).